Here is a 718-residue protein sequence, read N- to C-terminus: Sodium/myo-inositol cotransporter (718 aa).

Topologically, residues 1 to 9 (MRAVLEAAD) are extracellular. A helical transmembrane segment spans residues 10 to 29 (IAVVALYFILVMCIGFFAMW). The Cytoplasmic segment spans residues 30–38 (KSNRSTVSG). A helical transmembrane segment spans residues 39-57 (YFLAGRSMTWVAIGASLFV). Residues 58-86 (SNIGSEHFIGLAGSGAASGFAVGAWEFNA) are Extracellular-facing. Residues 87–110 (LLLLQLLGWVFIPIYIRSGVYTMP) form a helical membrane-spanning segment. Over 111 to 123 (EYLSKRFGGHRIQ) the chain is Cytoplasmic. A helical transmembrane segment spans residues 124-144 (VYFAALSLLLYIFTKLSVDLY). Residues 145 to 157 (SGALFIQESLGWN) are Extracellular-facing. The chain crosses the membrane as a helical span at residues 158 to 183 (LYVSVILLIGMTALLTVTGGLVAVIY). The Cytoplasmic segment spans residues 184–186 (TDT). A helical transmembrane segment spans residues 187 to 205 (LQALLMIIGALTLMVISMV). Over 206–303 (KIGGFEEVKR…HAKGSTLMAG (98 aa)) the chain is Extracellular. Asn-232 carries N-linked (GlcNAc...) asparagine glycosylation. Residues 304–324 (FLKLLPMFIIVVPGMISRIVF) traverse the membrane as a helical segment. At 325–353 (ADEIACINPEHCMQVCGSRAGCSNIAYPR) the chain is on the cytoplasmic side. A helical membrane pass occupies residues 354 to 376 (LVMTLVPVGLRGLMMAVMIAALM). Residues 377–406 (SDLDSIFNSASTIFTLDVYKLIRKSASSRE) are Extracellular-facing. Residues 407–430 (LMIVGRIFVAFMVVISIAWVPIIV) form a helical membrane-spanning segment. Topologically, residues 431-443 (EMQGGQMYLYIQE) are cytoplasmic. A helical membrane pass occupies residues 444-462 (VADYLTPPVAALFLLAIFW). The Extracellular segment spans residues 463–510 (KRCNEQGAFYGGMAGFVLGAVRLILAFTYRAPECDQPDNRPGFIKDIH). The chain crosses the membrane as a helical span at residues 511 to 532 (YMYVATALFWITGLITVIVSLL). The Cytoplasmic portion of the chain corresponds to 533 to 695 (TPPPTKDQIR…QMLEETPQVK (163 aa)). Phosphoserine is present on residues Ser-594 and Ser-632. The chain crosses the membrane as a helical span at residues 696–716 (VILNIGLFAVCSLGIFMFVYF). Residues 717–718 (SL) are Extracellular-facing.

This sequence belongs to the sodium:solute symporter (SSF) (TC 2.A.21) family. Interacts with KCNQ2 (via the pore module). Interacts with KCNQ1; this interaction is direct. Forms coregulatory complexes with ion channels KCNQ2-KCNQ3 and KCNQ1-KCNE2. As to expression, highly expressed in kidney, placenta, and brain and at a lesser extent in thymus, lung, bladder, and testes. Expressed in the choroid plexus epithelium (at protein level).

It is found in the apical cell membrane. The protein localises to the basolateral cell membrane. It carries out the reaction myo-inositol(out) + 2 Na(+)(out) = myo-inositol(in) + 2 Na(+)(in). The enzyme catalyses scyllo-inositol(out) + 2 Na(+)(out) = scyllo-inositol(in) + 2 Na(+)(in). Functionally, electrogenic Na(+)-coupled sugar symporter that actively transports myo-inositol and its stereoisomer scyllo-inositol across the plasma membrane, with a Na(+) to sugar coupling ratio of 2:1. Maintains myo-inositol concentration gradient that defines cell volume and fluid balance during osmotic stress, in particular in the fetoplacental unit and central nervous system. Forms coregulatory complexes with voltage-gated K(+) ion channels, allosterically altering ion selectivity, voltage dependence and gating kinetics of the channel. In turn, K(+) efflux through the channel forms a local electrical gradient that modulates electrogenic Na(+)-coupled myo-inositol influx through the transporter. Associates with KCNQ1-KCNE2 channel in the apical membrane of choroid plexus epithelium and regulates the myo-inositol gradient between blood and cerebrospinal fluid with an impact on neuron excitability. Associates with KCNQ2-KCNQ3 channel altering ion selectivity, increasing Na(+) and Cs(+) permeation relative to K(+) permeation. Provides myo-inositol precursor for biosynthesis of phosphoinositides such as PI(4,5)P2, thus indirectly affecting the activity of phosphoinositide-dependent ion channels and Ca(2+) signaling upon osmotic stress. In terms of biological role, (Microbial infection) Functions as a retroviral receptor for M813 murine leukemia virus (MuLV) entry. In Mus musculus (Mouse), this protein is Sodium/myo-inositol cotransporter (Slc5a3).